The following is a 249-amino-acid chain: 15,16-dihydrobiliverdin:ferredoxin oxidoreductase (249 aa).

It belongs to the HY2 family.

It carries out the reaction 15,16-dihydrobiliverdin + oxidized 2[4Fe-4S]-[ferredoxin] = biliverdin IXalpha + reduced 2[4Fe-4S]-[ferredoxin] + 2 H(+). Its function is as follows. Catalyzes the two-electron reduction of biliverdin IX-alpha at the C15 methine bridge. In Prochlorococcus marinus (strain MIT 9303), this protein is 15,16-dihydrobiliverdin:ferredoxin oxidoreductase.